Here is a 166-residue protein sequence, read N- to C-terminus: MAAATSLSFFHSTLASSSSSSVQQLSLPPKFVNFRPQTLPLIQAKAHTRREDRTARHVRIRKKVEGTPERPRLCVFRSNKHLYVQVIDDTKMHTLAAASTMQKAISENIDYSAGPTVEVAQKIGEMIAKSCLEKGITKVAFDRGGYPYHGRVKALADAAREHGLVF.

A chloroplast-targeting transit peptide spans 1–44 (MAAATSLSFFHSTLASSSSSSVQQLSLPPKFVNFRPQTLPLIQA).

Belongs to the universal ribosomal protein uL18 family. In terms of assembly, component of the chloroplast large ribosomal subunit (LSU). Mature 70S chloroplast ribosomes of higher plants consist of a small (30S) and a large (50S) subunit. The 30S small subunit contains 1 molecule of ribosomal RNA (16S rRNA) and 24 different proteins. The 50S large subunit contains 3 rRNA molecules (23S, 5S and 4.5S rRNA) and 33 different proteins.

It is found in the plastid. It localises to the chloroplast. Its function is as follows. Component of the chloroplast ribosome (chloro-ribosome), a dedicated translation machinery responsible for the synthesis of chloroplast genome-encoded proteins, including proteins of the transcription and translation machinery and components of the photosynthetic apparatus. This Spinacia oleracea (Spinach) protein is Large ribosomal subunit protein uL18c (RPL18).